Here is a 373-residue protein sequence, read N- to C-terminus: Glutamine synthetase (373 aa).

The residue at position 2 (A2) is an N-acetylalanine. The interval 2–25 (ATSASSHLNKGIKQMYMSLPQGEK) is required for glutamine-induced ubiquitination by CRL4(CRBN) and proteasomal degradation. 2 positions are modified to N6-acetyllysine: K11 and K14. Residues 24-106 (EKVQAMYIWV…VFCEVFKYNQ (83 aa)) form the GS beta-grasp domain. Y104 carries the post-translational modification Phosphotyrosine. A GS catalytic domain is found at 113 to 373 (LRHTCKRIMD…TGDQPFQYKN (261 aa)). Residue E134 coordinates ATP. Residues E134, E136, E196, and E203 each contribute to the Mn(2+) site. 203 to 208 (EFQIGP) is a binding site for ATP. 246-247 (NW) contributes to the L-glutamate binding site. H253 is a Mn(2+) binding site. Residues 255 to 257 (NFS), R319, and R324 each bind ATP. R319 lines the L-glutamate pocket. 336-338 (YFE) contacts ADP. A Mn(2+)-binding site is contributed by E338. R340 contributes to the L-glutamate binding site. A Phosphoserine modification is found at S343.

This sequence belongs to the glutamine synthetase family. Decamer; composed of two pentamers. Interacts with PALMD. Interacts with RHOJ. Interacts with BEST2; this interaction tethers a fraction of GLUL to the membrane, causing a decrease of cytosolic glutamine synthase (GS) activity and inhibits the chloride channel activity of BEST2 by affecting the gating at the aperture in the absence of intracellular glutamate. Requires Mg(2+) as cofactor. It depends on Mn(2+) as a cofactor. In terms of processing, palmitoylated; undergoes autopalmitoylation. Acetylated by EP300/p300; acetylation is stimulated by increased glutamine levels and promotes ubiquitin-mediated proteasomal degradation. Post-translationally, ubiquitinated by ZNRF1. Ubiquitinated by the DCX (DDB1-CUL4-X-box) E3 ubiquitin-protein ligase complex called CRL4(CRBN), leading to proteasomal degradation.

It localises to the cytoplasm. The protein resides in the cytosol. It is found in the microsome. Its subcellular location is the mitochondrion. The protein localises to the cell membrane. It catalyses the reaction L-glutamate + NH4(+) + ATP = L-glutamine + ADP + phosphate + H(+). The catalysed reaction is L-cysteinyl-[protein] + hexadecanoyl-CoA = S-hexadecanoyl-L-cysteinyl-[protein] + CoA. Its activity is regulated as follows. Glutamine synthetase activity is inhibited by methionine sulfoximine (MSO). Glutamine synthetase that catalyzes the ATP-dependent conversion of glutamate and ammonia to glutamine. Its role depends on tissue localization: in the brain, it regulates the levels of toxic ammonia and converts neurotoxic glutamate to harmless glutamine, whereas in the liver, it is one of the enzymes responsible for the removal of ammonia. Plays a key role in ammonium detoxification during erythropoiesis: the glutamine synthetase activity is required to remove ammonium generated by porphobilinogen deaminase (HMBS) during heme biosynthesis to prevent ammonium accumulation and oxidative stress. Essential for proliferation of fetal skin fibroblasts. Independently of its glutamine synthetase activity, required for endothelial cell migration during vascular development. Involved in angiogenesis by regulating membrane localization and activation of the GTPase RHOJ, possibly by promoting RHOJ palmitoylation. May act as a palmitoyltransferase for RHOJ: able to autopalmitoylate and then transfer the palmitoyl group to RHOJ. Plays a role in ribosomal 40S subunit biogenesis. Through the interaction with BEST2, inhibits BEST2 channel activity by affecting the gating at the aperture in the absence of intracellular L-glutamate, but sensitizes BEST2 to intracellular L-glutamate, which promotes the opening of BEST2 and thus relieves its inhibitory effect on BEST2. This chain is Glutamine synthetase, found in Cricetulus griseus (Chinese hamster).